The following is a 63-amino-acid chain: DNA-directed RNA polymerase 7 kDa subunit (63 aa).

It belongs to the poxviridae DNA-directed RNA polymerase 7 kDa subunit family. As to quaternary structure, the DNA-dependent RNA polymerase (vRNAP) consists of eight subunits encoded by early viral genes and termed according to their apparent molecular masses Rpo147, Rpo132, Rpo35, Rpo30, Rpo22, Rpo19, Rpo18, and Rpo7. The same holoenzyme, with the addition of the transcription-specificity factor RAP94, is used for early gene expression.

It is found in the virion. It catalyses the reaction RNA(n) + a ribonucleoside 5'-triphosphate = RNA(n+1) + diphosphate. In terms of biological role, part of the DNA-dependent RNA polymerase which catalyzes the transcription of viral DNA into RNA using the four ribonucleoside triphosphates as substrates. Responsible for the transcription of early, intermediate and late genes. DNA-dependent RNA polymerase associates with the early transcription factor (ETF), itself composed of OPG118 and OPG134, thereby allowing the early genes transcription. Late transcription, and probably also intermediate transcription, require newly synthesized RNA polymerase. The sequence is that of DNA-directed RNA polymerase 7 kDa subunit (OPG090) from Monkeypox virus.